The following is a 360-amino-acid chain: MPSTLQALTKKVLATQPVFKDDYCILERCGLWWHEAPITIHHTCIDKQILIKTASFKHGLTLNVALMKAVQENNHGLIELFTEWGADISFGLVTVNMECTQDLCQKLGARKALSENKILEIFYNVQYVKTSSNIILCHELLSDNPLFLNNAQLKLRIFGELDTLSINFTLDNISFNEMLTRYWYSMAILYKLTEAIQYFYQRYSHFKDWRLICGVAYNNVFDLHEIYNKEKTNIDIDEMMQLACMYDCNYTTIYYCCMLGADINRAMITSVMNFCEGNLFLCIDLGADAFEESMEIASQTNNWILINILLFKNYSPDSSLLSIKTTDPEKINALLDEEKYKSKNMLIYEESLFHIYGVNI.

Belongs to the asfivirus MGF 360 family.

Plays a role in virus cell tropism, and may be required for efficient virus replication in macrophages. This chain is Protein MGF 360-1L, found in African swine fever virus (strain Badajoz 1971 Vero-adapted) (Ba71V).